We begin with the raw amino-acid sequence, 778 residues long: Endonuclease MutS2 (778 aa).

An ATP-binding site is contributed by Gly-328–Thr-335. In terms of domain architecture, Smr spans Leu-702–Lys-777.

Belongs to the DNA mismatch repair MutS family. MutS2 subfamily. In terms of assembly, homodimer. Binds to stalled ribosomes, contacting rRNA.

Endonuclease that is involved in the suppression of homologous recombination and thus may have a key role in the control of bacterial genetic diversity. In terms of biological role, acts as a ribosome collision sensor, splitting the ribosome into its 2 subunits. Detects stalled/collided 70S ribosomes which it binds and splits by an ATP-hydrolysis driven conformational change. Acts upstream of the ribosome quality control system (RQC), a ribosome-associated complex that mediates the extraction of incompletely synthesized nascent chains from stalled ribosomes and their subsequent degradation. Probably generates substrates for RQC. In Streptococcus pneumoniae (strain 70585), this protein is Endonuclease MutS2.